The sequence spans 228 residues: Prolactin-2A1 (228 aa).

The signal sequence occupies residues 1-28 (MQLSVTHPCCRTLILLLVSNLLLWESEA). Disulfide bonds link C87–C203 and C220–C228.

Belongs to the somatotropin/prolactin family. As to expression, expressed specifically in the placenta. Expression restricted to the junctional zone of the chorioallantoic placenta.

The protein resides in the secreted. In Mus musculus (Mouse), this protein is Prolactin-2A1 (Prl2a1).